The primary structure comprises 374 residues: uncharacterized protein (374 aa).

Positions 39-66 (RDVRKHLESRDAKQELIDSLEEAVRDSR) form a coiled coil.

This is an uncharacterized protein from Mycobacterium tuberculosis (strain CDC 1551 / Oshkosh).